The following is a 175-amino-acid chain: Methylated-DNA--protein-cysteine methyltransferase (175 aa).

Y115 and R127 together coordinate DNA. The active-site Nucleophile; methyl group acceptor is C144.

Belongs to the MGMT family.

Its subcellular location is the nucleus. It catalyses the reaction a 6-O-methyl-2'-deoxyguanosine in DNA + L-cysteinyl-[protein] = S-methyl-L-cysteinyl-[protein] + a 2'-deoxyguanosine in DNA. The catalysed reaction is a 4-O-methyl-thymidine in DNA + L-cysteinyl-[protein] = a thymidine in DNA + S-methyl-L-cysteinyl-[protein]. Its function is as follows. Involved in the cellular defense against the biological effects of O6-methylguanine (O6-MeG) and O4-methylthymine (O4-MeT) in DNA. Repairs the methylated nucleobase in DNA by stoichiometrically transferring the methyl group to a cysteine residue in the enzyme. This is a suicide reaction: the enzyme is irreversibly inactivated. This is Methylated-DNA--protein-cysteine methyltransferase (MGT1) from Candida albicans (strain SC5314 / ATCC MYA-2876) (Yeast).